Here is a 103-residue protein sequence, read N- to C-terminus: Small ribosomal subunit protein uS10 (103 aa).

Belongs to the universal ribosomal protein uS10 family. In terms of assembly, part of the 30S ribosomal subunit.

In terms of biological role, involved in the binding of tRNA to the ribosomes. The chain is Small ribosomal subunit protein uS10 from Xylella fastidiosa (strain 9a5c).